The following is a 360-amino-acid chain: Snurportin-1 (360 aa).

Met-1 is subject to N-acetylmethionine. Positions 1-42 (MEELSQALASSFSVSQDLNSTAAPHPRLSQYKSKYSSLEQSE) are disordered. Positions 1–65 (MEELSQALAS…LDYVNHARRL (65 aa)) are necessary for interaction with KPNB1 and m3G-cap U1 and U5 snRNP import receptor activity. Residues 1–159 (MEELSQALAS…NRFSSLLPGG (159 aa)) form a necessary for interaction with XPO1 region. Over residues 7-22 (ALASSFSVSQDLNSTA) the composition is skewed to polar residues. In terms of domain architecture, IBB spans 11-73 (SFSVSQDLNS…RLAEDDWTGM (63 aa)). Ser-75 is subject to Phosphoserine. Positions 127 to 129 (GKR) are interaction with m3G-cap structure. The interval 208–328 (MHSKLPEEEG…GMKEKLTHKA (121 aa)) is necessary for binding to the m3G-cap structure. The segment at 339 to 360 (LSTPKLKGSSHSPDHPGCLMEN) is disordered. Ser-350 is modified (phosphoserine).

It belongs to the snurportin family. Component of an import snRNP complex composed of KPNB1, SNUPN, SMN1 and ZNF259. Component of a nuclear export receptor complex composed of KPNB1, Ran, SNUPN and XPO1. Found in a trimeric export complex with SNUPN, Ran and XPO1. Interacts (via IBB domain) with KPNB1; the interaction is direct. Interacts with DDX20, IPO7, SMN1, SNRPB and XPO1. Interacts directly with XPO1. Its interaction with XPO1 and binding to m3G-cap U snRNPs appears to be mutually exclusive. Can form homomers.

Its subcellular location is the nucleus. The protein localises to the cytoplasm. In terms of biological role, functions as an U snRNP-specific nuclear import adapter. Involved in the trimethylguanosine (m3G)-cap-dependent nuclear import of U snRNPs. Binds specifically to the terminal m3G-cap U snRNAs. The polypeptide is Snurportin-1 (SNUPN) (Homo sapiens (Human)).